We begin with the raw amino-acid sequence, 640 residues long: tRNA uridine 5-carboxymethylaminomethyl modification enzyme MnmG (640 aa).

9–14 (GGGHAG) lines the FAD pocket. 289–303 (GPRYCPSIEDKINKF) contributes to the NAD(+) binding site.

Belongs to the MnmG family. Homodimer. Heterotetramer of two MnmE and two MnmG subunits. The cofactor is FAD.

It localises to the cytoplasm. In terms of biological role, NAD-binding protein involved in the addition of a carboxymethylaminomethyl (cmnm) group at the wobble position (U34) of certain tRNAs, forming tRNA-cmnm(5)s(2)U34. This is tRNA uridine 5-carboxymethylaminomethyl modification enzyme MnmG from Campylobacter hominis (strain ATCC BAA-381 / DSM 21671 / CCUG 45161 / LMG 19568 / NCTC 13146 / CH001A).